Consider the following 380-residue polypeptide: Growth-regulating factor 4 (380 aa).

Residues 1 to 21 (MDLQLKQWRSQQQNESEEQGS) form a disordered region. Positions 82–117 (FFSWAQWQELELQALIYRYMLAGASVPQELLLPIKK) constitute a QLQ domain. Residues 151–195 (DPEPGRCKRTDGKKWRCSRDVVAGHKYCDRHIHRGRNRSRKPVET) enclose the WRC domain. 2 consecutive short sequence motifs (bipartite nuclear localization signal) follow at residues 156-166 (RCKRTDGKKWR) and 184-191 (RGRNRSRK). 2 disordered regions span residues 222–270 (NNNH…GRSD) and 284–330 (RSSD…NMRN). Low complexity-rich tracts occupy residues 228–245 (SSGS…SCSS) and 285–296 (SSDSTSSPMSSS). Positions 297 to 320 (TCHLSISMPGNNTSSDVSLKLSTG) are enriched in polar residues.

Belongs to the GRF family. Strongly expressed in actively growing and developing tissues, such as roots, upper stems, and shoot tips containing the shoot apical meristem (SAM) and flower buds. Also expressed in mature flowers, but weakly expressed in mature stems and leaves.

It is found in the nucleus. In terms of biological role, transcription activator that plays a role in the regulation of cell expansion in leaf and cotyledons tissues. Component of a network formed by miR396, the GRFs and their interacting factors (GIFs) acting in the regulation of meristem function, at least partially through the control of cell proliferation. The chain is Growth-regulating factor 4 (GRF4) from Arabidopsis thaliana (Mouse-ear cress).